The following is a 392-amino-acid chain: Streptogrisin-D (392 aa).

The first 64 residues, 1–64 (MCVSRRRNSG…AGFTFQTANA (64 aa)), serve as a signal peptide directing secretion. Positions 65–204 (SDDVPAFGAK…NRTAGEFTPL (140 aa)) are excised as a propeptide. Cys218 and Cys238 are joined by a disulfide. Active-site charge relay system residues include His237, Asp266, and Ser348. Cys342 and Cys369 are oxidised to a cystine.

Belongs to the peptidase S1 family. Homodimer.

Has a primary specificity for large aliphatic or aromatic amino acids. The chain is Streptogrisin-D (sprD) from Streptomyces griseus.